The following is a 125-amino-acid chain: Egg cell-secreted protein 1.3 (125 aa).

The first 24 residues, 1-24, serve as a signal peptide directing secretion; it reads MASNTSFLFVTVTLLLVLNVSSRA.

This sequence belongs to the plant egg cell-secreted peptide family. Restricted to female reproductive tissues, specifically accumulating in storage vesicles of the unfertilized egg cell.

It localises to the cytoplasmic vesicle. The protein localises to the secreted. Involved in the regulation of gamete interactions during the double fertilization and to prevent multiple-pollen tube attraction; mediates the redistribution of the gamete fusogen HAP2/GCS1 to the cell surface after secretion upon sperm arrival. The polypeptide is Egg cell-secreted protein 1.3 (EC1.3) (Arabidopsis thaliana (Mouse-ear cress)).